Here is a 419-residue protein sequence, read N- to C-terminus: Putative zinc metalloprotease M6_Spy1682 (419 aa).

Histidine 18 is a binding site for Zn(2+). Glutamate 19 is an active-site residue. Histidine 22 provides a ligand contact to Zn(2+). Transmembrane regions (helical) follow at residues 169-191 (LITNFAGPMNNFILGIVVFILLV), 301-323 (LAWSGAFTILNALKGLITGFSLN), 343-365 (LESVLSLMAMLSINLGIFNLIPI), and 392-411 (AYITLAGVAIMVVLMIAVTW). The PDZ domain maps to 175–274 (GPMNNFILGI…LKTVAVKPQK (100 aa)).

This sequence belongs to the peptidase M50B family. The cofactor is Zn(2+).

Its subcellular location is the cell membrane. The polypeptide is Putative zinc metalloprotease M6_Spy1682 (Streptococcus pyogenes serotype M6 (strain ATCC BAA-946 / MGAS10394)).